Consider the following 28-residue polypeptide: Ribosome-inactivating protein pleuturegin (28 aa).

The protein belongs to the ribosome-inactivating protein family.

The enzyme catalyses Endohydrolysis of the N-glycosidic bond at one specific adenosine on the 28S rRNA.. Functionally, inhibits protein synthesis in animal cells. Does not possess ribonuclease activity. This Pleurotus tuber-regium (King tuber oyster mushroom) protein is Ribosome-inactivating protein pleuturegin.